Here is a 196-residue protein sequence, read N- to C-terminus: Ribosome-binding factor A (196 aa).

The protein belongs to the RbfA family. Monomer. Binds 30S ribosomal subunits, but not 50S ribosomal subunits or 70S ribosomes.

The protein localises to the cytoplasm. Functionally, one of several proteins that assist in the late maturation steps of the functional core of the 30S ribosomal subunit. Associates with free 30S ribosomal subunits (but not with 30S subunits that are part of 70S ribosomes or polysomes). Required for efficient processing of 16S rRNA. May interact with the 5'-terminal helix region of 16S rRNA. This is Ribosome-binding factor A from Tropheryma whipplei (strain TW08/27) (Whipple's bacillus).